Here is a 208-residue protein sequence, read N- to C-terminus: Thymidylate kinase (208 aa).

10-17 (GPEGSGKT) contacts ATP.

This sequence belongs to the thymidylate kinase family.

It catalyses the reaction dTMP + ATP = dTDP + ADP. Phosphorylation of dTMP to form dTDP in both de novo and salvage pathways of dTTP synthesis. This is Thymidylate kinase from Bacillus cereus (strain ATCC 14579 / DSM 31 / CCUG 7414 / JCM 2152 / NBRC 15305 / NCIMB 9373 / NCTC 2599 / NRRL B-3711).